The sequence spans 154 residues: Interleukin-2 (154 aa).

A signal peptide spans 1–20 (MYRMQLLSCIALSLALITNS). A glycan (O-linked (GalNAc...) threonine) is linked at threonine 23. Cysteine 78 and cysteine 126 are disulfide-bonded.

It belongs to the IL-2 family.

It is found in the secreted. Cytokine produced by activated CD4-positive helper T-cells and to a lesser extend activated CD8-positive T-cells and natural killer (NK) cells that plays pivotal roles in the immune response and tolerance. Binds to a receptor complex composed of either the high-affinity trimeric IL-2R (IL2RA/CD25, IL2RB/CD122 and IL2RG/CD132) or the low-affinity dimeric IL-2R (IL2RB and IL2RG). Interaction with the receptor leads to oligomerization and conformation changes in the IL-2R subunits resulting in downstream signaling starting with phosphorylation of JAK1 and JAK3. In turn, JAK1 and JAK3 phosphorylate the receptor to form a docking site leading to the phosphorylation of several substrates including STAT5. This process leads to activation of several pathways including STAT, phosphoinositide-3-kinase/PI3K and mitogen-activated protein kinase/MAPK pathways. Functions as a T-cell growth factor and can increase NK-cell cytolytic activity as well. Promotes strong proliferation of activated B-cells and subsequently immunoglobulin production. Plays a pivotal role in regulating the adaptive immune system by controlling the survival and proliferation of regulatory T-cells, which are required for the maintenance of immune tolerance. Moreover, participates in the differentiation and homeostasis of effector T-cell subsets, including Th1, Th2, Th17 as well as memory CD8-positive T-cells. The protein is Interleukin-2 (IL2) of Papio hamadryas (Hamadryas baboon).